Reading from the N-terminus, the 1149-residue chain is Beta-alanine-activating enzyme (1149 aa).

Residues 178 to 186 (TSGTTGLPK), Asp408, Arg422, and Lys543 each bind ATP. The Carrier domain occupies 570–646 (ASVRLKLQNL…DLLSHIMTET (77 aa)). Ser605 is subject to O-(pantetheine 4'-phosphoryl)serine. Positions 653 to 683 (PSKKRTADYSDSEASGKRQHKEMTTSSDTES) are disordered.

The protein belongs to the ATP-dependent AMP-binding enzyme family.

Functionally, covalently binds beta-alanine in an ATP-dependent manner to form a thioester bond with its phosphopantetheine group and transfers it to an, as yet, unknown acceptor. May be required for a post-translational protein modification or for post-transcriptional modification of an RNA. This is Beta-alanine-activating enzyme (aasdh) from Danio rerio (Zebrafish).